We begin with the raw amino-acid sequence, 510 residues long: MGGNLSSELKSTKYRKREIVDLRKMNIDKLPPTIGALQCKELLLSENDLITIPEEIGKLSKVEIIDFAKNRINYIPPEIGSLATLKQLFLSNNKLFYTPITPNIGALKNLTRLDLSSNQLDDLPVEISNCEALEYLDISDNQLQSFPLEFGKLYNLQVFNCSKNSLKSLPSEISGWVKLEELNVSNNQLAFLPNQICLLGLLSTLNVGFNKLQQLPEELSSMVSLTNLDLKVNPPLQYVPQLSNLRQLKILSIRNLQITHLPLGLGLLSELIELDIRDNPQLKEIPYDIATLINLQKLDLFGNNMRIVPREVGNLINLQTLDLRQNKLTIDNIPSEIGKLVNLKKLLLSNNLLIALPPEIASMKALKEFEASNNQLQAIPTEIGELSGLTKINLSGNKLTSIPASFGNLSELQICDLKSNEIAELPTTLDGLKSCTKIDLSHNMLTELPWEFGDLIGLTILDVGHNPLTIPPNPIVMKGTESIIQWLKKNEKEGRKGKVSGLGIQQDNEK.

20 LRR repeats span residues 14–34, 35–59, 60–82, 84–106, 107–130, 132–152, 153–176, 177–200, 202–222, 224–245, 246–270, 272–292, 293–315, 316–340, 341–363, 365–386, 387–408, 410–432, 433–458, and 460–478; these read YRKR…PPTI, GALQ…IGKL, SKVE…IGSL, TLKQ…NIGA, LKNL…ISNC, ALEY…EFGK, LYNL…ISGW, VKLE…CLLG, LSTL…LSSM, SLTN…LSNL, RQLK…LLSE, IELD…IATL, INLQ…VGNL, INLQ…IGKL, VNLK…IASM, ALKE…IGEL, SGLT…SFGN, SELQ…LDGL, KSCT…LIGL, and ILDV…IVMK.

Its subcellular location is the cytoplasm. Functionally, involved in cytoskeleton remodeling, which is needed for normal chemotactic aggregation and efficient cell sorting during multicellular morphogenesis. The polypeptide is Leucine-rich repeat protein lrrA (lrrA) (Dictyostelium discoideum (Social amoeba)).